A 269-amino-acid chain; its full sequence is Flagellar brake protein YcgR (269 aa).

The PilZ domain occupies 134-254 (QRRNFYRVTT…SRLLIQRYIT (121 aa)).

The protein belongs to the YcgR family. In terms of assembly, monomer. Interacts with the flagellar basal bodies.

It localises to the bacterial flagellum basal body. Its function is as follows. Acts as a flagellar brake, regulating swimming and swarming in a bis-(3'-5') cyclic diguanylic acid (c-di-GMP)-dependent manner. Binds 1 c-di-GMP dimer per subunit. Increasing levels of c-di-GMP lead to decreased motility. The polypeptide is Flagellar brake protein YcgR (Nitrosomonas eutropha (strain DSM 101675 / C91 / Nm57)).